A 326-amino-acid polypeptide reads, in one-letter code: Pectate lyase plyB (326 aa).

The signal sequence occupies residues 1-15 (MRFTPLFLLAAVAIA). D133, D162, and D166 together coordinate Ca(2+). The active site involves R219.

Belongs to the polysaccharide lyase 1 family. Ca(2+) is required as a cofactor.

It is found in the secreted. It carries out the reaction Eliminative cleavage of (1-&gt;4)-alpha-D-galacturonan to give oligosaccharides with 4-deoxy-alpha-D-galact-4-enuronosyl groups at their non-reducing ends.. The protein operates within glycan metabolism; pectin degradation; 2-dehydro-3-deoxy-D-gluconate from pectin: step 2/5. Pectinolytic enzyme consist of four classes of enzymes: pectin lyase, polygalacturonase, pectin methylesterase and rhamnogalacturonase. Among pectinolytic enzymes, pectin lyase is the most important in depolymerization of pectin, since it cleaves internal glycosidic bonds of highly methylated pectins. The protein is Pectate lyase plyB (plyB) of Emericella nidulans (strain FGSC A4 / ATCC 38163 / CBS 112.46 / NRRL 194 / M139) (Aspergillus nidulans).